We begin with the raw amino-acid sequence, 215 residues long: Deoxyribose-phosphate aldolase (215 aa).

Asp-89 functions as the Proton donor/acceptor in the catalytic mechanism. The active-site Schiff-base intermediate with acetaldehyde is Lys-153. Lys-182 (proton donor/acceptor) is an active-site residue.

Belongs to the DeoC/FbaB aldolase family. DeoC type 1 subfamily.

It is found in the cytoplasm. The enzyme catalyses 2-deoxy-D-ribose 5-phosphate = D-glyceraldehyde 3-phosphate + acetaldehyde. Its pathway is carbohydrate degradation; 2-deoxy-D-ribose 1-phosphate degradation; D-glyceraldehyde 3-phosphate and acetaldehyde from 2-deoxy-alpha-D-ribose 1-phosphate: step 2/2. Functionally, catalyzes a reversible aldol reaction between acetaldehyde and D-glyceraldehyde 3-phosphate to generate 2-deoxy-D-ribose 5-phosphate. This is Deoxyribose-phosphate aldolase from Lactiplantibacillus plantarum (strain ATCC BAA-793 / NCIMB 8826 / WCFS1) (Lactobacillus plantarum).